Reading from the N-terminus, the 135-residue chain is MKVAVLXAAGGIQALALLLKTSLYDIAPVTPGVAVDLSHIPTDVKIKGFSGEDATPALEGADVVLISAGVARKPGMDRSDLFNVNAGIVKNLVQQIAKTCPQACIGIITNPVNTTVAIAAEVLKKAGVYDKNKLF.

NAD(+) contacts are provided by residues 7-12 (XAAGGI) and aspartate 25. Residues arginine 72 and arginine 78 each contribute to the substrate site. NAD(+) is bound by residues asparagine 85 and 108 to 110 (ITN). Residue asparagine 110 coordinates substrate.

This sequence belongs to the LDH/MDH superfamily. MDH type 1 family. As to quaternary structure, homodimer.

It carries out the reaction (S)-malate + NAD(+) = oxaloacetate + NADH + H(+). In terms of biological role, catalyzes the reversible oxidation of malate to oxaloacetate. This chain is Malate dehydrogenase (mdh), found in Klebsiella pneumoniae.